The sequence spans 775 residues: Dipeptidyl peptidase 4 (775 aa).

The first 15 residues, 1–15 (MKLLSLLMLAGIAQA), serve as a signal peptide directing secretion. 4 N-linked (GlcNAc...) asparagine glycosylation sites follow: Asn81, Asn111, Asn170, and Asn219. Active-site charge relay system residues include Ser613, Asp690, and His725.

The protein belongs to the peptidase S9B family.

The protein localises to the secreted. It catalyses the reaction Release of an N-terminal dipeptide, Xaa-Yaa-|-Zaa-, from a polypeptide, preferentially when Yaa is Pro, provided Zaa is neither Pro nor hydroxyproline.. Its function is as follows. Extracellular dipeptidyl-peptidase which removes N-terminal dipeptides sequentially from polypeptides having unsubstituted N-termini provided that the penultimate residue is proline. Contributes to pathogenicity. The polypeptide is Dipeptidyl peptidase 4 (DPP4) (Trichophyton tonsurans (Scalp ringworm fungus)).